Consider the following 911-residue polypeptide: Beta-galactosidase 12 (911 aa).

The signal sequence occupies residues 1 to 25 (MAARVAAAVAAALLAAALLLPGAAA). E192 acts as the Proton donor in catalysis. E262 (nucleophile) is an active-site residue. 4 N-linked (GlcNAc...) asparagine glycosylation sites follow: N263, N389, N473, and N777. One can recognise an SUEL-type lectin domain in the interval 744–831 (EDTSTRGTLN…ATLAVQLLLA (88 aa)).

This sequence belongs to the glycosyl hydrolase 35 family.

It localises to the secreted. It is found in the extracellular space. The protein resides in the apoplast. It catalyses the reaction Hydrolysis of terminal non-reducing beta-D-galactose residues in beta-D-galactosides.. This chain is Beta-galactosidase 12, found in Oryza sativa subsp. japonica (Rice).